The primary structure comprises 232 residues: AA9 family lytic polysaccharide monooxygenase C (232 aa).

The N-terminal stretch at Met-1–Ala-19 is a signal peptide. The Cu(2+) site is built by His-20 and His-91. An intrachain disulfide couples Cys-61 to Cys-180. Residues His-166 and Gln-175 each coordinate O2. Residue Tyr-177 coordinates Cu(2+). Asn-184 carries N-linked (GlcNAc...) asparagine glycosylation.

The protein belongs to the polysaccharide monooxygenase AA9 family. The cofactor is Cu(2+).

It localises to the secreted. The enzyme catalyses [(1-&gt;4)-beta-D-glucosyl]n+m + reduced acceptor + O2 = 4-dehydro-beta-D-glucosyl-[(1-&gt;4)-beta-D-glucosyl]n-1 + [(1-&gt;4)-beta-D-glucosyl]m + acceptor + H2O.. Its function is as follows. Lytic polysaccharide monooxygenase (LPMO) that depolymerizes crystalline and amorphous polysaccharides via the oxidation of scissile alpha- or beta-(1-4)-glycosidic bonds, yielding C1 or C4 oxidation products. Catalysis by LPMOs requires the reduction of the active-site copper from Cu(II) to Cu(I) by a reducing agent and H(2)O(2) or O(2) as a cosubstrate. The polypeptide is AA9 family lytic polysaccharide monooxygenase C (Malbranchea cinnamomea (Thermophilic fungus)).